The chain runs to 195 residues: Achaete-scute homolog 1b (195 aa).

Residues Met-66–Leu-118 enclose the bHLH domain. The tract at residues Val-141–Glu-164 is disordered.

In terms of assembly, efficient DNA binding requires dimerization with another bHLH protein. In terms of tissue distribution, in the 24 hours embryo, expressed in hindbrain close to the anterior and posterior boundaries of rhombomeres 2-6 and in ventral cells close to the floor plate of most rhombomeres. Also expressed in the telencephalon, diencephalon, tegmentum and spinal cord at sites distinct from those expressing ascl1a. Not expressed in the adenohypophysis.

The protein resides in the nucleus. In terms of biological role, transcriptional regulator. May mediate transcription activation by binding to the E box-containing promoter. Involved in neurogenesis. Involved in maintaining rhombomere boundaries in the hindbrain, probably via up-regulation of delta expression. May mediate transcription activation by binding to the E box-containing promoter. This Danio rerio (Zebrafish) protein is Achaete-scute homolog 1b.